The chain runs to 20 residues: Dahlein-5.3 (20 aa).

In terms of tissue distribution, expressed by the skin dorsal glands.

It is found in the secreted. Has no antimicrobial activity. Strongly inhibits the formation of NO by neuronal nitric oxide synthase at micromolar concentrations. The sequence is that of Dahlein-5.3 from Ranoidea dahlii (Dahl's aquatic frog).